The sequence spans 522 residues: Flavin-dependent halogenase armH1 (522 aa).

3 residues coordinate FAD: G16, A19, and E49. Residues S328 and G329 each contribute to the chloride site. Residue I330 participates in FAD binding.

Belongs to the flavin-dependent halogenase family.

It catalyses the reaction melleolide F + FADH2 + chloride + O2 = 6'-chloromelleolide F + FAD + 2 H2O + H(+). In terms of biological role, flavin-dependent halogenase involved in the biosynthesis of melleolides, a range of antifungal and phytotoxic polyketide derivatives composed of an orsellinic acid (OA) moiety esterified to various sesquiterpene alcohols. The halogenase catalyzes the transfer of a single chlorine atom to the melleolide backbone, resulting in a 6'-chloromelleolide product. The enzyme acts on free substrate and does not depend on carrier-protein-dependent acceptor molecules. The sequence is that of Flavin-dependent halogenase armH1 from Armillaria mellea (Honey mushroom).